A 223-amino-acid polypeptide reads, in one-letter code: Adenylate kinase (223 aa).

10–15 is a binding site for ATP; that stretch reads GSGKGT. The segment at 30 to 59 is NMP; that stretch reads ESGAIFRKHIGGGTELGMKAKEYIDKGELV. AMP contacts are provided by residues Ser-31, Arg-36, 57-59, 84-87, and Gln-91; these read ELV and GFPR. The segment at 125 to 164 is LID; that stretch reads GRRLCENDPNHPNNKFIDAIKPDGDKCRVCGGALSERADD. Arg-126 provides a ligand contact to ATP. AMP is bound by residues Arg-161 and Arg-173. Gly-209 contacts ATP.

This sequence belongs to the adenylate kinase family. As to quaternary structure, monomer.

It localises to the cytoplasm. The catalysed reaction is AMP + ATP = 2 ADP. Its pathway is purine metabolism; AMP biosynthesis via salvage pathway; AMP from ADP: step 1/1. Catalyzes the reversible transfer of the terminal phosphate group between ATP and AMP. Plays an important role in cellular energy homeostasis and in adenine nucleotide metabolism. The chain is Adenylate kinase from Maridesulfovibrio salexigens (strain ATCC 14822 / DSM 2638 / NCIMB 8403 / VKM B-1763) (Desulfovibrio salexigens).